Reading from the N-terminus, the 328-residue chain is MDRDQTNSSLFNDDPVLHATWLYYQEGKSQTEVAAIMGVSRVTVVKYLQTARENGLVHINLDVNVFGSIDAALQIRDKFNLQRVIIVPDGEHAGKRDDTKLMRTRLSRAGGMYLNQVIENGDVLGVAWGRTIHQMSKTMTPKSCKNVTVIQMLGSMPSQPDLTIIESSSQIAYKLSGRVASLHVPAVVSSARLAMELQAEPIIRSNFDVLTRCTKAFFVVGNALDENPLIRVGVLNKKEMQTYRDLGAVGVICGRFYDKEGMPVVADVDQRILGISLAQLRQIERKIFLAGGERGYDATLGALLGGYVTDLIVDEGTAEFLLACELPH.

A DNA-binding region (H-T-H motif) is located at residues 72-91 (ALQIRDKFNLQRVIIVPDGE).

Belongs to the SorC transcriptional regulatory family.

This is an uncharacterized protein from Escherichia coli (strain K12).